The chain runs to 288 residues: NAD kinase (288 aa).

Aspartate 68 functions as the Proton acceptor in the catalytic mechanism. Residues 68-69 (DG), 142-143 (ND), arginine 153, aspartate 172, and glutamine 242 contribute to the NAD(+) site.

It belongs to the NAD kinase family. A divalent metal cation is required as a cofactor.

It is found in the cytoplasm. The catalysed reaction is NAD(+) + ATP = ADP + NADP(+) + H(+). In terms of biological role, involved in the regulation of the intracellular balance of NAD and NADP, and is a key enzyme in the biosynthesis of NADP. Catalyzes specifically the phosphorylation on 2'-hydroxyl of the adenosine moiety of NAD to yield NADP. The polypeptide is NAD kinase (Desulforamulus reducens (strain ATCC BAA-1160 / DSM 100696 / MI-1) (Desulfotomaculum reducens)).